Here is a 220-residue protein sequence, read N- to C-terminus: Ribonuclease HII (220 aa).

Residues 32-220 (KHIAGIDEAG…FAPIKGRFDC (189 aa)) form the RNase H type-2 domain. The a divalent metal cation site is built by Asp-38, Glu-39, and Asp-130.

The protein belongs to the RNase HII family. Mn(2+) is required as a cofactor. Requires Mg(2+) as cofactor.

It is found in the cytoplasm. It catalyses the reaction Endonucleolytic cleavage to 5'-phosphomonoester.. Endonuclease that specifically degrades the RNA of RNA-DNA hybrids. This chain is Ribonuclease HII, found in Brucella ovis (strain ATCC 25840 / 63/290 / NCTC 10512).